The chain runs to 506 residues: Methylthioalkylmalate synthase 1, chloroplastic (506 aa).

Residues 1-49 constitute a chloroplast transit peptide; it reads MASSLLTSSVMIPTTGSTVVGRSVLPFQSSLHSLRLTHSYKNPALFISC. In terms of domain architecture, Pyruvate carboxyltransferase spans 85–359; the sequence is VRVFDTTLRD…YTKIDTRQIM (275 aa). Phosphoserine is present on Ser-98.

Belongs to the alpha-IPM synthase/homocitrate synthase family. Monomer. The cofactor is Mn(2+). Highly expressed in leaves, flowers, roots and siliques. Not detected in flowers in PubMed:12432038.

The protein localises to the plastid. It is found in the chloroplast. The enzyme catalyses an omega-(methylsulfanyl)-2-oxoalkanoate + acetyl-CoA + H2O = a 2-(omega-methylsulfanyl)alkylmalate + CoA + H(+). With respect to regulation, 1 mM DTT required for activity. Activated by ATP and inhibited by iodoacetamide. In terms of biological role, determines the side chain length of aliphatic glucosinolate structures. Catalyzes exclusively the condensation reactions of both the first and second methionine carbon chain elongation. The protein is Methylthioalkylmalate synthase 1, chloroplastic (MAM1) of Arabidopsis thaliana (Mouse-ear cress).